The primary structure comprises 60 residues: Cytotoxin 7 (60 aa).

Intrachain disulfides connect Cys-3–Cys-21, Cys-14–Cys-38, Cys-42–Cys-53, and Cys-54–Cys-59.

The protein belongs to the three-finger toxin family. Short-chain subfamily. Type IA cytotoxin sub-subfamily. As to quaternary structure, monomer in solution; Homodimer and oligomer in the presence of negatively charged lipids forming a pore with a size ranging between 20 and 30 Angstroms. Expressed by the venom gland.

It is found in the secreted. Its subcellular location is the target cell membrane. In terms of biological role, shows cytolytic activity on many different cells by forming pore in lipid membranes. In vivo, increases heart rate or kills the animal by cardiac arrest. In addition, it binds to heparin with high affinity, interacts with Kv channel-interacting protein 1 (KCNIP1) in a calcium-independent manner, and binds to integrin alpha-V/beta-3 (ITGAV/ITGB3) with moderate affinity. Preferentially binds acidic phospholipids like phosphatidylserine, phosphatidic acid and phosphatidyl glycerol. Has hemolytic activity towards human erythrocytes (EC(50)=0.171 uM) and cytolytic activity towards various cell lines. This is Cytotoxin 7 from Naja naja (Indian cobra).